A 72-amino-acid chain; its full sequence is UPF0270 protein ETA_31870 (72 aa).

Belongs to the UPF0270 family.

This is UPF0270 protein ETA_31870 from Erwinia tasmaniensis (strain DSM 17950 / CFBP 7177 / CIP 109463 / NCPPB 4357 / Et1/99).